Consider the following 291-residue polypeptide: MSLLDWFADRRKTAPALRPTPEPDEGDGLWSKCPECGEVVYRKDLIANASVCASCGYHHRIHSEERLRILLDPGSFIPVDGELSPTDPLAFKDRRAYADRLRDSQRQTGLRDAVVCGTGTIEGQGIALAVMDFRFMGGSMGSVVGEKITRLIETATEQQLPVLVVCASGGARMQEGMLSLMQMAKISGALERHRSRKLLYIPLLTHPTTGGVTASFAMLGDLILAEPKALIGFAGRRVIEQTLREKLPDNFQTAEYLQDHGFVDAIIPRTQLRSRLASLLQMHQQPAAVSA.

A CoA carboxyltransferase N-terminal domain is found at 29–291 (LWSKCPECGE…MHQQPAAVSA (263 aa)). Zn(2+)-binding residues include Cys-33, Cys-36, Cys-52, and Cys-55. The C4-type zinc-finger motif lies at 33–55 (CPECGEVVYRKDLIANASVCASC).

The protein belongs to the AccD/PCCB family. In terms of assembly, acetyl-CoA carboxylase is a heterohexamer composed of biotin carboxyl carrier protein (AccB), biotin carboxylase (AccC) and two subunits each of ACCase subunit alpha (AccA) and ACCase subunit beta (AccD). It depends on Zn(2+) as a cofactor.

The protein resides in the cytoplasm. The catalysed reaction is N(6)-carboxybiotinyl-L-lysyl-[protein] + acetyl-CoA = N(6)-biotinyl-L-lysyl-[protein] + malonyl-CoA. It functions in the pathway lipid metabolism; malonyl-CoA biosynthesis; malonyl-CoA from acetyl-CoA: step 1/1. Its function is as follows. Component of the acetyl coenzyme A carboxylase (ACC) complex. Biotin carboxylase (BC) catalyzes the carboxylation of biotin on its carrier protein (BCCP) and then the CO(2) group is transferred by the transcarboxylase to acetyl-CoA to form malonyl-CoA. The polypeptide is Acetyl-coenzyme A carboxylase carboxyl transferase subunit beta (Synechococcus sp. (strain RCC307)).